A 236-amino-acid polypeptide reads, in one-letter code: MADDWESAADSEVVIRPTAAASVNKWEGEDEDEDIKDSWEDEEEKKDEEKPTKTEAPAKPKPNKALKAKLEQQALLEEEAEAKRLANLSPAEKLAEKLRLQKIQEASDLKHAQEAFGVTSTCGGLDAFNPETKEEFKEFGATLSWKVGQFRESEHFPQFVEDLVRSLCVNLSAADIKKVKMNVEILHSEKLKLEKANAKKPAGKGKGKVTLRTENDDIDGYQKYGNDFTEDYDDFM.

The disordered stretch occupies residues 1-65 (MADDWESAAD…APAKPKPNKA (65 aa)). Over residues 28-46 (GEDEDEDIKDSWEDEEEKK) the composition is skewed to acidic residues. The span at 47-58 (DEEKPTKTEAPA) shows a compositional bias: basic and acidic residues.

It belongs to the eIF-3 subunit J family. As to quaternary structure, component of the eukaryotic translation initiation factor 3 (eIF-3) complex. The eIF-3 complex interacts with pix.

It is found in the cytoplasm. Functionally, component of the eukaryotic translation initiation factor 3 (eIF-3) complex, which is involved in protein synthesis of a specialized repertoire of mRNAs and, together with other initiation factors, stimulates binding of mRNA and methionyl-tRNAi to the 40S ribosome. The eIF-3 complex specifically targets and initiates translation of a subset of mRNAs involved in cell proliferation. This is Eukaryotic translation initiation factor 3 subunit J from Drosophila melanogaster (Fruit fly).